The primary structure comprises 657 residues: Probable cobalt/nickel-exporting P-type ATPase (657 aa).

The next 5 helical transmembrane spans lie at 40-60 (WATV…NGAP), 62-82 (AMWW…SAWA), 101-121 (AAVG…IVIF), 268-288 (LGMV…GADL), and 299-319 (MIVA…LSAI). D347 (4-aspartylphosphate intermediate) is an active-site residue. Residues D543 and D547 each contribute to the Mg(2+) site. The chain crosses the membrane as a helical span at residues 596–618 (VVTVNLAIAATFIAVLVLWDLFG).

The protein belongs to the cation transport ATPase (P-type) (TC 3.A.3) family. Type IB subfamily.

Its subcellular location is the cell membrane. Involved in heavy metal homeostasis. Probably exports nickel and cobalt ions out of the cell. The protein is Probable cobalt/nickel-exporting P-type ATPase (ctpD) of Mycobacterium bovis (strain ATCC BAA-935 / AF2122/97).